The chain runs to 247 residues: Coproheme decarboxylase (247 aa).

Fe-coproporphyrin III contacts are provided by residues R129, 143–147, H170, Q183, and S221; that span reads YPMDK. The active site involves Y143.

It belongs to the ChdC family. Type 1 subfamily. It depends on Fe-coproporphyrin III as a cofactor.

The enzyme catalyses Fe-coproporphyrin III + 2 H2O2 + 2 H(+) = heme b + 2 CO2 + 4 H2O. It catalyses the reaction Fe-coproporphyrin III + H2O2 + H(+) = harderoheme III + CO2 + 2 H2O. The catalysed reaction is harderoheme III + H2O2 + H(+) = heme b + CO2 + 2 H2O. It functions in the pathway porphyrin-containing compound metabolism; protoheme biosynthesis. Involved in coproporphyrin-dependent heme b biosynthesis. Catalyzes the decarboxylation of Fe-coproporphyrin III (coproheme) to heme b (protoheme IX), the last step of the pathway. The reaction occurs in a stepwise manner with a three-propionate intermediate. The chain is Coproheme decarboxylase from Bacillus cereus (strain ATCC 10987 / NRS 248).